The primary structure comprises 1072 residues: MPKRLDINTILVIGSGPIVIGQAAEFDYSGTQACQSLKEEGYKVILVNSNPATIMTDTATADKVYIEPLTLEFVSRIIRKERPDAILPTLGGQTGLNMAVELAKSGVLEECGVEILGTKLSAIEQAEDRDLFRTLMQELNEPTPPSEIVHTLDEAYEFVKEIGYPVIVRPAFTLGGTGGGICHNEEELIEIVTSGLKHSPVTQCLLEKSIAGFKEIEYEVMRDANDNAIVVCNMENIDPVGVHTGDSIVVAPSQTLSDREYQMLRNTSLRIIRALGIEGGCNVQLALDPYSFQYYVIEVNPRVSRSSALASKATGYPIAKLAAKIAVGLTLDEIVNPVTQKTYACFEPALDYVVSKIPRWPFDKFESANRTLGTQMKATGEVMSIGRNLEESLLKAVRSLELGIYHLELNHLKELDKETMKKRIIKADDERLFIVAEAIRQGVTKEEIHEWCEMDFFFLQKIENIVNMERKVKANVGDMEVLREAKEMGFSDHYIASAWNKTECEIYATRKENGIMPVFKMVDTCAAEFESATPYYYSTYGDENESIVTERKSVMVLGSGPIRIGQGVEFDYATVHSVWAIKEAGYEAIIVNNNPETVSTDFSISDKLYFEPLTIEDVMHIIDLEKPEGVIVQFGGQTAINLAAKLAERGVKILGTSLEDLDRAEDRDKFEAALTELGIPQPVGKTATTVEQAVAIAEEIGYPVLVRPSYVLGGRAMEIVYRQEELLHYMKNAVKVHADHPVLIDRYMVGKEIEVDAISDGENVYIPGIMEHIERAGVHSGDSIGVYPPQSLSAKVKEQIIENTIALGRGLKIVGLLNIQFVVFKDEVYVIEVNPRASRTVPFLSKITGVPMANIATKVILGKNLVEQGYETGYHPEDNEVYVKAPVFSFAKLRSVDTTLGPEMKSTGEVMGKDLTLEKALYKGLVAAGISIPTHGSVIITVADKDKEEAIEIARRFHEIGYNLLATAGTAKSLTEQNIPVQVVNKIDSEDYNLLDIIRQGKAQFVINTLTKGKQPARDGFRIRRESVENGVACLTSLDTTRAILRVLESMTFSAHTMKEIAPTTRHEVVHA.

The interval methionine 1–glutamate 401 is carboxyphosphate synthetic domain. 12 residues coordinate ATP: arginine 129, arginine 169, glycine 175, glycine 176, lysine 208, isoleucine 210, glutamate 215, glycine 241, valine 242, histidine 243, glutamine 284, and glutamate 298. One can recognise an ATP-grasp 1 domain in the interval arginine 133–valine 327. The Mg(2+) site is built by glutamine 284, glutamate 298, and asparagine 300. Positions 284, 298, and 300 each coordinate Mn(2+). Residues leucine 402–serine 546 form an oligomerization domain region. The segment at isoleucine 547–glycine 929 is carbamoyl phosphate synthetic domain. The ATP-grasp 2 domain maps to glutamate 671 to leucine 861. The ATP site is built by arginine 707, arginine 746, glutamate 752, glycine 777, valine 778, histidine 779, serine 780, glutamine 820, and glutamate 832. Mg(2+) is bound by residues glutamine 820, glutamate 832, and asparagine 834. Glutamine 820, glutamate 832, and asparagine 834 together coordinate Mn(2+). An MGS-like domain is found at isoleucine 930 to alanine 1072. The segment at isoleucine 930 to alanine 1072 is allosteric domain.

The protein belongs to the CarB family. In terms of assembly, composed of two chains; the small (or glutamine) chain promotes the hydrolysis of glutamine to ammonia, which is used by the large (or ammonia) chain to synthesize carbamoyl phosphate. Tetramer of heterodimers (alpha,beta)4. Mg(2+) is required as a cofactor. The cofactor is Mn(2+).

It carries out the reaction hydrogencarbonate + L-glutamine + 2 ATP + H2O = carbamoyl phosphate + L-glutamate + 2 ADP + phosphate + 2 H(+). The enzyme catalyses hydrogencarbonate + NH4(+) + 2 ATP = carbamoyl phosphate + 2 ADP + phosphate + 2 H(+). It functions in the pathway amino-acid biosynthesis; L-arginine biosynthesis; carbamoyl phosphate from bicarbonate: step 1/1. The protein operates within pyrimidine metabolism; UMP biosynthesis via de novo pathway; (S)-dihydroorotate from bicarbonate: step 1/3. Large subunit of the glutamine-dependent carbamoyl phosphate synthetase (CPSase). CPSase catalyzes the formation of carbamoyl phosphate from the ammonia moiety of glutamine, carbonate, and phosphate donated by ATP, constituting the first step of 2 biosynthetic pathways, one leading to arginine and/or urea and the other to pyrimidine nucleotides. The large subunit (synthetase) binds the substrates ammonia (free or transferred from glutamine from the small subunit), hydrogencarbonate and ATP and carries out an ATP-coupled ligase reaction, activating hydrogencarbonate by forming carboxy phosphate which reacts with ammonia to form carbamoyl phosphate. This chain is Carbamoyl phosphate synthase large chain, found in Bacillus cytotoxicus (strain DSM 22905 / CIP 110041 / 391-98 / NVH 391-98).